A 452-amino-acid polypeptide reads, in one-letter code: UPF0210 protein Hore_14430 (452 aa).

The protein belongs to the UPF0210 family. As to quaternary structure, homodimer.

The protein is UPF0210 protein Hore_14430 of Halothermothrix orenii (strain H 168 / OCM 544 / DSM 9562).